The primary structure comprises 72 residues: Protein LITTLE ZIPPER 4 (72 aa).

Residues 14–44 are a coiled coil; that stretch reads YIIKENERLRKKAQILNQENQQLLFELKQKL. Residues 42 to 72 are disordered; sequence QKLSKTKNSSGSNQGNNNNNNNLSSSSSASG. Residues 49–72 are compositionally biased toward low complexity; the sequence is NSSGSNQGNNNNNNNLSSSSSASG.

In terms of assembly, interacts with REV.

In terms of biological role, competitive inhibitor of the HD-ZIPIII transcription factors in shoot apical meristem (SAM) development. Acts by forming non-functional heterodimers. Part of a negative feedback loop. Essential for proper functioning of stem cells in the SAM. This is Protein LITTLE ZIPPER 4 from Arabidopsis thaliana (Mouse-ear cress).